Reading from the N-terminus, the 453-residue chain is Exopolyphosphatase PRUNE1 (453 aa).

Methionine 1 bears the N-acetylmethionine mark. Aspartate 28, aspartate 30, aspartate 106, and aspartate 179 together coordinate Mn(2+). A DHH motif motif is present at residues 106–108 (DHH). Residues 393-420 (SLISGLSQDEEDPPLPPTPMNSLVDECP) form an essential for homodimerization region. Residues 395 to 421 (ISGLSQDEEDPPLPPTPMNSLVDECPL) form a disordered region. Serine 399 bears the Phosphoserine mark. Position 410 is a phosphothreonine (threonine 410). Position 414 is a phosphoserine (serine 414).

It belongs to the PPase class C family. Prune subfamily. In terms of assembly, homooligomer. Able to homodimerize via its C-terminal domain. Interacts with NME1. Interacts with GSK3; at focal adhesion complexes where paxillin and vinculin are colocalized. Interacts with alpha and beta tubulin. Mn(2+) serves as cofactor. In terms of tissue distribution, ubiquitously expressed. Seems to be overexpressed in aggressive sarcoma subtypes, such as leiomyosarcomas and malignant fibrous histiocytomas (MFH) as well as in the less malignant liposarcomas.

The protein localises to the cytoplasm. It is found in the nucleus. The protein resides in the cell junction. It localises to the focal adhesion. It carries out the reaction diphosphate + H2O = 2 phosphate + H(+). Activated by magnesium ions and inhibited by manganese ions. Inhibited by dipyridamole, moderately sensitive to IBMX and inhibited by vinpocetine. In terms of biological role, phosphodiesterase (PDE) that has higher activity toward cAMP than cGMP, as substrate. Plays a role in cell proliferation, migration and differentiation, and acts as a negative regulator of NME1. Plays a role in the regulation of neurogenesis. Involved in the regulation of microtubule polymerization. The chain is Exopolyphosphatase PRUNE1 from Homo sapiens (Human).